A 98-amino-acid chain; its full sequence is Large ribosomal subunit protein bL28 (98 aa).

In terms of assembly, part of the 50S ribosomal subunit.

This Thermus thermophilus (strain ATCC 27634 / DSM 579 / HB8) protein is Large ribosomal subunit protein bL28 (rpmB).